Here is a 300-residue protein sequence, read N- to C-terminus: GTPase Era (300 aa).

The Era-type G domain maps to 4-172 (KSGFVALIGR…LEKIKKLLPE (169 aa)). The segment at 12–19 (GRPNVGKS) is G1. 12–19 (GRPNVGKS) lines the GTP pocket. A G2 region spans residues 38–42 (QTTRN). Residues 59–62 (DTPG) form a G3 region. GTP contacts are provided by residues 59–63 (DTPGV) and 122–125 (NKAD). A G4 region spans residues 122 to 125 (NKAD). The G5 stretch occupies residues 151–153 (IAA). The KH type-2 domain occupies 195–281 (IREKILLNLS…NLQLWVKVKK (87 aa)).

This sequence belongs to the TRAFAC class TrmE-Era-EngA-EngB-Septin-like GTPase superfamily. Era GTPase family. As to quaternary structure, monomer.

The protein localises to the cytoplasm. The protein resides in the cell membrane. Functionally, an essential GTPase that binds both GDP and GTP, with rapid nucleotide exchange. Plays a role in 16S rRNA processing and 30S ribosomal subunit biogenesis and possibly also in cell cycle regulation and energy metabolism. The sequence is that of GTPase Era from Caldicellulosiruptor saccharolyticus (strain ATCC 43494 / DSM 8903 / Tp8T 6331).